The primary structure comprises 353 residues: sn-glycerol-3-phosphate import ATP-binding protein UgpC (353 aa).

An ABC transporter domain is found at 4-234; that stretch reads ILLNDVRKSY…PASEFVAGFI (231 aa). Position 36–43 (36–43) interacts with ATP; that stretch reads GPSGCGKS.

Belongs to the ABC transporter superfamily. sn-glycerol-3-phosphate importer (TC 3.A.1.1.3) family. The complex is composed of two ATP-binding proteins (UgpC), two transmembrane proteins (UgpA and UgpE) and a solute-binding protein (UgpB).

It localises to the cell inner membrane. It catalyses the reaction sn-glycerol 3-phosphate(out) + ATP + H2O = sn-glycerol 3-phosphate(in) + ADP + phosphate + H(+). Its function is as follows. Part of the ABC transporter complex UgpBAEC involved in sn-glycerol-3-phosphate (G3P) import. Responsible for energy coupling to the transport system. The chain is sn-glycerol-3-phosphate import ATP-binding protein UgpC from Paracoccus denitrificans (strain Pd 1222).